Reading from the N-terminus, the 210-residue chain is Large ribosomal subunit protein uL4 (210 aa).

It belongs to the universal ribosomal protein uL4 family. As to quaternary structure, part of the 50S ribosomal subunit.

Functionally, one of the primary rRNA binding proteins, this protein initially binds near the 5'-end of the 23S rRNA. It is important during the early stages of 50S assembly. It makes multiple contacts with different domains of the 23S rRNA in the assembled 50S subunit and ribosome. Its function is as follows. Forms part of the polypeptide exit tunnel. This is Large ribosomal subunit protein uL4 from Orientia tsutsugamushi (strain Boryong) (Rickettsia tsutsugamushi).